We begin with the raw amino-acid sequence, 259 residues long: Trans-4-hydroxycyclohexanecarboxylate dehydrogenase (259 aa).

Residues Arg20, Met22, Asp41, Asp73, Val74, Asn100, Tyr164, Lys168, Val197, Thr199, and Thr202 each coordinate NAD(+). The Proton acceptor role is filled by Tyr164.

Belongs to the short-chain dehydrogenases/reductases (SDR) family. Homodimer. Homotetramer.

It carries out the reaction trans-4-hydroxycyclohexane-1-carboxylate + NAD(+) = 4-oxocyclohexane-1-carboxylate + NADH + H(+). With respect to regulation, strongly inhibited by N-bromosuccinimide. Not inhibited by sulfhydryl reagents, such as iodoacetic acid, iodoacetamide, N-ethylmaleimide and p-hydroxymercuribenzoic acid. Its function is as follows. Dehydrogenase involved in a cyclohexanecarboxylate (CHCA) degradation pathway. Catalyzes the NAD(+)-dependent dehydrogenation of trans-4-hydroxycyclohexanecarboxylate (trans-4-hydroxyCHCA) to form 4-oxocyclohexanecarboxylate (4-oxoCHCA). Is highly specific for the trans-4-hydroxy derivative and shows only weak activity with cis-4-hydroxyCHCA. Can also catalyze the reverse reaction (4-oxoCHCA reduction) with a higher catalytic efficiency. In the reverse reaction, is highly specific for 4-oxoCHCA and cannot use either the 2-oxo or the 3-oxo homolog as substrate. Cannot use NADP(+). The chain is Trans-4-hydroxycyclohexanecarboxylate dehydrogenase from Sinomonas cyclohexanicum (Corynebacterium cyclohexanicum).